The primary structure comprises 407 residues: Melanoma-associated antigen B6 (407 aa).

The segment at 1-175 (MPRGHKSKLR…YDVAAEGEDE (175 aa)) is disordered. 4 stretches are compositionally biased toward polar residues: residues 18 to 29 (TNGQPQGLTGPQ), 57 to 71 (DASI…SPTG), 94 to 113 (PSTS…SPTG), and 136 to 155 (PSTS…SPTG). Residues 195-394 (VKKKACTLAQ…GLYPHLYEDA (200 aa)) form the MAGE domain.

As to expression, expressed in testis. Not expressed in other normal tissues, but is expressed in tumors of different histological origins.

This Homo sapiens (Human) protein is Melanoma-associated antigen B6 (MAGEB6).